The sequence spans 295 residues: 4-hydroxy-tetrahydrodipicolinate synthase (295 aa).

T46 contacts pyruvate. The active-site Proton donor/acceptor is the Y134. The active-site Schiff-base intermediate with substrate is the K162. Position 205 (I205) interacts with pyruvate.

The protein belongs to the DapA family. In terms of assembly, homotetramer; dimer of dimers.

Its subcellular location is the cytoplasm. The catalysed reaction is L-aspartate 4-semialdehyde + pyruvate = (2S,4S)-4-hydroxy-2,3,4,5-tetrahydrodipicolinate + H2O + H(+). It functions in the pathway amino-acid biosynthesis; L-lysine biosynthesis via DAP pathway; (S)-tetrahydrodipicolinate from L-aspartate: step 3/4. Functionally, catalyzes the condensation of (S)-aspartate-beta-semialdehyde [(S)-ASA] and pyruvate to 4-hydroxy-tetrahydrodipicolinate (HTPA). The polypeptide is 4-hydroxy-tetrahydrodipicolinate synthase (Anaeromyxobacter sp. (strain Fw109-5)).